Consider the following 405-residue polypeptide: Neisseria adhesin A (405 aa).

Residues 1–23 form the signal peptide; sequence MKHFPSKVLTTAILATFCSGALA. The segment at 24–87 is head domain; sequence ATNDDDVKKA…ADDFKGLGLK (64 aa). 2 coiled-coil regions span residues 87–170 and 181–329; these read KKVV…KLEA and AFND…LRKE. The coiled stalk domain stretch occupies residues 88–350; the sequence is KVVTNLTKTV…SGLFQPYNVG (263 aa). Residues 312–350 are outer membrane translocation of the passenger domain; it reads HDTRLNGLDKTVSDLRKETRQGLAEQAALSGLFQPYNVG. 4 beta stranded membrane passes run 350–360, 364–375, 382–388, and 394–405; these read GRFNVTAAVGG, ESAVAIGTGFRF, KAGVAVG, and SAAYHVGVNYEW. Positions 351 to 405 are translocator domain; the sequence is RFNVTAAVGGYKSESAVAIGTGFRFTENFAAKAGVAVGTSSGSSAAYHVGVNYEW.

The protein belongs to the autotransporter-2 (AT-2) (TC 1.B.40) family. As to quaternary structure, the non-membrane anchored protein (residues 24-350) probably forms a homotrimer; it is assumed the mature protein forms trimers in situ. The mature protein without the membrane-targeting segment (residues 24-350) binds to human heat shock 90 beta protein (HSP90AB1) both in vitro and when incubated with human monocytes. A subsequent paper showed binding of the same fragment in epithelial cells to both HSP90AA1 and HSP90AB1; in vitro the interaction is stabilized by ADP and the Hsp90 inhibitor 17-AAG (17-N-allylamino-17-demethoxygeldanamycin), in vitro and in vivo both interactions are inhibited by ATP. Binds human oxidized low-density lipoprotein receptor 1 (LOX-1, OLR1) in protein microarrays, in solution and when LOX-1 is expressed on the cell surface. Binds via the head and the beginning of the coiled stalk (residues 24-170); binding can be abrogated by monoclonal antibodies against those specific regions of NadA. Other potential binding partners were identified but not characterized in the same study. Forms high molecular weight oligomers in whole cell extracts that are not disrupted by boiling in SDS buffer.

The protein localises to the cell outer membrane. It is found in the cell surface. Functionally, adheres to and induces bacterial uptake by human epithelial cells in a microfilament-dependent process. Binding is reduced by pronase treatment, suggesting there is a protein receptor on the human cells. Possible human protein receptors include integrin beta-1 (ITGB1) and oxidized low-density lipoprotein receptor 1 (OLR1). Binds to extracellular human Hsp90 (preferentially the beta isoform, HSP90AB1) on monocytes, binding stimulates monocytes in a TLR4-dependent fashion, polymixin B, which binds NadA, blocks the activation. Hsp90 is probably not the first receptor on human monocytes. Non-membrane anchored protein (residues 24-350) is internalized into human epithelial cells by hijacking the endosome recycling pathway and may be recycled back to the cell surface, which might aid transcellular trafficking of the bacteria. A bacterial cell surface protein; antisera against this protein induce complement-mediated killing of this and other strains. The sequence is that of Neisseria adhesin A from Neisseria meningitidis serogroup B.